The chain runs to 379 residues: Succinyl-diaminopimelate desuccinylase (379 aa).

His-68 contributes to the Zn(2+) binding site. The active site involves Asp-70. A Zn(2+)-binding site is contributed by Asp-101. Glu-134 serves as the catalytic Proton acceptor. The Zn(2+) site is built by Glu-135, Glu-163, and His-352.

The protein belongs to the peptidase M20A family. DapE subfamily. Homodimer. The cofactor is Zn(2+). Co(2+) serves as cofactor.

It carries out the reaction N-succinyl-(2S,6S)-2,6-diaminopimelate + H2O = (2S,6S)-2,6-diaminopimelate + succinate. Its pathway is amino-acid biosynthesis; L-lysine biosynthesis via DAP pathway; LL-2,6-diaminopimelate from (S)-tetrahydrodipicolinate (succinylase route): step 3/3. Functionally, catalyzes the hydrolysis of N-succinyl-L,L-diaminopimelic acid (SDAP), forming succinate and LL-2,6-diaminopimelate (DAP), an intermediate involved in the bacterial biosynthesis of lysine and meso-diaminopimelic acid, an essential component of bacterial cell walls. This Dinoroseobacter shibae (strain DSM 16493 / NCIMB 14021 / DFL 12) protein is Succinyl-diaminopimelate desuccinylase.